A 288-amino-acid polypeptide reads, in one-letter code: Quinate/shikimate dehydrogenase (288 aa).

Positions 71 and 107 each coordinate substrate. NAD(+)-binding positions include 132–135, 155–158, lysine 205, 232–235, and glycine 255; these read AGGA, NRRD, and CVYN.

It belongs to the shikimate dehydrogenase family. In terms of assembly, homodimer.

The catalysed reaction is L-quinate + NAD(+) = 3-dehydroquinate + NADH + H(+). The enzyme catalyses L-quinate + NADP(+) = 3-dehydroquinate + NADPH + H(+). It catalyses the reaction shikimate + NADP(+) = 3-dehydroshikimate + NADPH + H(+). It carries out the reaction shikimate + NAD(+) = 3-dehydroshikimate + NADH + H(+). The protein operates within metabolic intermediate biosynthesis; chorismate biosynthesis; chorismate from D-erythrose 4-phosphate and phosphoenolpyruvate: step 4/7. Its function is as follows. The actual biological function of YdiB remains unclear, nor is it known whether 3-dehydroshikimate or quinate represents the natural substrate. Catalyzes the reversible NAD-dependent reduction of both 3-dehydroshikimate (DHSA) and 3-dehydroquinate to yield shikimate (SA) and quinate, respectively. It can use both NAD or NADP for catalysis, however it has higher catalytic efficiency with NAD. This is Quinate/shikimate dehydrogenase from Shigella sonnei (strain Ss046).